The primary structure comprises 151 residues: Deoxyuridine 5'-triphosphate nucleotidohydrolase (151 aa).

Substrate-binding positions include Arg-70–Gly-72, Asn-83, Leu-87–Asp-89, and Met-97.

It belongs to the dUTPase family. Mg(2+) is required as a cofactor.

The enzyme catalyses dUTP + H2O = dUMP + diphosphate + H(+). Its pathway is pyrimidine metabolism; dUMP biosynthesis; dUMP from dCTP (dUTP route): step 2/2. Functionally, this enzyme is involved in nucleotide metabolism: it produces dUMP, the immediate precursor of thymidine nucleotides and it decreases the intracellular concentration of dUTP so that uracil cannot be incorporated into DNA. This Pseudomonas aeruginosa (strain UCBPP-PA14) protein is Deoxyuridine 5'-triphosphate nucleotidohydrolase.